The primary structure comprises 740 residues: MRRPYLLATAAGLALACSPLIAHAQFAPAGAGGEPSSSVPGPGNASEPTENSPKSQSYFAGPSPYAPQAPGVNAANLPDIESIDPSQVPAMAPQQSANPARGDWVAYGRDDHQTRYSPLSEITPENASKLKVAFVYHTGSYPRPGQVNKWAAETTPIKVGDGLYTCSAMNDIIKLDPATGKQIWRRNVDVKYHSIPYTAACKGVTYFTSSVVPEGQPCHNRLIEGTLDMRLIAVDAETGDFCPNFGHGGQVNLMQGLGESVPGFVSMTAPPPVINGVVVVNHEVLDGQRRWAPSGVIRGYDAESGKFVWAWDVNNSDDHSQPTGNRHYSRGTPNSWATMTGDNEEGLVYVPTGNSAADYYSALRSDAENKVSSAVVAIDVKTGSPRWVFQTAHKDVWDYDIGSQATLMDMPGPDGQTVPALIMPTKRGQTFVLDRRTGKPILPVEERPAPSPGVIPGDPRSPTQPWSVGMPALRVPDLKETDMWGMSPIDQLFCRIKFRRANYVGEFTPPSVDKPWIEYPGYNGGSDWGSMSYDPQSGILIANWNITPMYDQLVTRKKADSLGLMPIDDPNFKPGGGGAEGNGAMDGTPYGIVVTPFWDQYTGMMCNRPPYGMITAIDMKHGQKVLWQHPLGTARANGPWGLPTGLPWEIGTPNNGGSVVTGGGLIFIGAATDNQIRAIDEHTGKVVWSAVLPGGGQANPMTYEANGHQYVAIMAGGHHFMMTPVSDQLVVYALPDAIKQ.

Positions 1-29 (MRRPYLLATAAGLALACSPLIAHAQFAPA) are cleaved as a signal peptide. 2 disordered regions span residues 28-105 (PAGA…GDWV) and 442-468 (LPVEERPAPSPGVIPGDPRSPTQPWSV). Residues 34–43 (EPSSSVPGPG) show a composition bias toward low complexity. The segment covering 46–58 (SEPTENSPKSQSY) has biased composition (polar residues).

This sequence belongs to the bacterial PQQ dehydrogenase family. The cofactor is pyrroloquinoline quinone.

The protein localises to the secreted. The catalysed reaction is glycerol + A = dihydroxyacetone + AH2. Functionally, catalyzes the oxidation of glycerol to glycerone. Also acts, more slowly, on a number of other polyols including D-sorbitol, D-arabinitol, D-mannitol, meso-erythritol, adonitol and propylene glycol. This chain is Glycerol dehydrogenase large subunit (sldA), found in Gluconobacter thailandicus.